A 473-amino-acid polypeptide reads, in one-letter code: Glycine--tRNA ligase (473 aa).

2 residues coordinate substrate: arginine 101 and glutamate 172. ATP is bound by residues 204–206 (RNE), 214–219 (FRTREF), 289–290 (EL), and 333–336 (GVER). 219 to 223 (FEQME) contributes to the substrate binding site. Residue 329 to 333 (EPSVG) participates in substrate binding.

The protein belongs to the class-II aminoacyl-tRNA synthetase family. In terms of assembly, homodimer.

Its subcellular location is the cytoplasm. The enzyme catalyses tRNA(Gly) + glycine + ATP = glycyl-tRNA(Gly) + AMP + diphosphate. Functionally, catalyzes the attachment of glycine to tRNA(Gly). The protein is Glycine--tRNA ligase of Ureaplasma urealyticum serovar 10 (strain ATCC 33699 / Western).